A 298-amino-acid polypeptide reads, in one-letter code: 4-nitrophenylphosphatase (298 aa).

In terms of assembly, homodimer. In terms of processing, the N-terminus is blocked.

The catalysed reaction is 4-nitrophenyl phosphate + H2O = 4-nitrophenol + phosphate + H(+). With respect to regulation, activity enhanced by Mg(2+) ion but inhibited by Zn(2+) ion. In Schizosaccharomyces pombe (strain 972 / ATCC 24843) (Fission yeast), this protein is 4-nitrophenylphosphatase (pho2).